A 664-amino-acid chain; its full sequence is Macoilin (664 aa).

The next 4 membrane-spanning stretches (helical) occupy residues 28–48, 75–95, 120–140, and 154–174; these read TFLY…DFVL, AFSV…LLFI, VCLP…AIRF, and FAAH…KSYV. Positions 253 to 265 are enriched in basic and acidic residues; sequence REKGKEKDKDAKK. Residues 253 to 274 form a disordered region; the sequence is REKGKEKDKDAKKHNLGINNNN. S305 bears the Phosphoserine mark. Positions 320–348 are enriched in polar residues; the sequence is KNYKNASGVVNSSPRSHSATNGSIPSSSS. Residues 320–375 form a disordered region; sequence KNYKNASGVVNSSPRSHSATNGSIPSSSSKNEKKQKCTSKSPSTHKDLMENCIPNN. N-linked (GlcNAc...) asparagine glycosylation is present at N324. S332 is modified (phosphoserine). N-linked (GlcNAc...) asparagine glycans are attached at residues N340 and N452. The interval 630 to 664 is disordered; it reads TSPLSPVSPHYSSKFVETSPSGLDPNASVYQPLKK. 2 positions are modified to phosphoserine: S631 and S634. N-linked (GlcNAc...) asparagine glycosylation is present at N655.

It belongs to the macoilin family.

Its subcellular location is the rough endoplasmic reticulum membrane. It localises to the nucleus membrane. Plays a role in the regulation of neuronal activity. The chain is Macoilin (MACO1) from Macaca mulatta (Rhesus macaque).